The following is a 337-amino-acid chain: m7GpppX diphosphatase (337 aa).

The disordered stretch occupies residues 1–37; the sequence is MADTAPQPSKRKRERDPEEAEAPSTEEKEARVGNGTS. An N-acetylalanine modification is found at Ala2. Positions 10 to 13 match the nuclear localization signal (NLS) motif; it reads KRKR. Phosphoserine occurs at positions 24 and 101. 2 positions are modified to N6-acetyllysine: Lys138 and Lys142. Positions 142 to 154 match the nuclear export sequence (NES) motif; the sequence is KYLHQDLHLVRET. Substrate is bound by residues Trp175, Glu185, Asp205, Lys207, and 268 to 279; that span reads HYLPSYYHLHVH. The Histidine triad motif motif lies at 275-279; the sequence is HLHVH. Residue His277 is the Nucleophile of the active site.

It belongs to the HIT family. In terms of assembly, homodimer. Associates with components of the exosome multienzyme ribonuclease complex, such as EXOSC3 and EXOSC4. Interacts with NDOR1.

The protein localises to the cytoplasm. It is found in the nucleus. It catalyses the reaction a 5'-end (N(7)-methyl 5'-triphosphoguanosine)-ribonucleoside in mRNA + H2O = N(7)-methyl-GMP + a 5'-end diphospho-ribonucleoside in mRNA + 2 H(+). The hydrolytic product 7-methylguanosine diphosphate (m7GDP) efficiently inhibits the decapping scavenger activity and acts as a competitive inhibitor in vitro. Inhibited by 2,4-diaminoquinazoline. Functionally, decapping scavenger enzyme that catalyzes the cleavage of a residual cap structure following the degradation of mRNAs by the 3'-&gt;5' exosome-mediated mRNA decay pathway. Hydrolyzes cap analog structures like 7-methylguanosine nucleoside triphosphate (m7GpppG) with up to 10 nucleotide substrates (small capped oligoribonucleotides) and specifically releases 5'-phosphorylated RNA fragments and 7-methylguanosine monophosphate (m7GMP). Cleaves cap analog structures like tri-methyl guanosine nucleoside triphosphate (m3(2,2,7)GpppG) with very poor efficiency. Does not hydrolyze unmethylated cap analog (GpppG) and shows no decapping activity on intact m7GpppG-capped mRNA molecules longer than 25 nucleotides. Does not hydrolyze 7-methylguanosine diphosphate (m7GDP) to m7GMP. May also play a role in the 5'-&gt;3 mRNA decay pathway; m7GDP, the downstream product released by the 5'-&gt;3' mRNA mediated decapping activity, may be also converted by DCPS to m7GMP. Binds to m7GpppG and strongly to m7GDP. Plays a role in first intron splicing of pre-mRNAs. Inhibits activation-induced cell death. The polypeptide is m7GpppX diphosphatase (DCPS) (Sus scrofa (Pig)).